An 833-amino-acid chain; its full sequence is CUB domain-containing protein 1 (833 aa).

An N-terminal signal peptide occupies residues 1–29 (MAHSACGFSVALLGALLLGTARLLRGTEA). The Extracellular segment spans residues 30-666 (SEIALPQRSG…VTLTPRTVDL (637 aa)). N-linked (GlcNAc...) asparagine glycans are attached at residues Asn-122, Asn-180, Asn-205, Asn-270, Asn-310, Asn-342, and Asn-386. In terms of domain architecture, CUB spans 417–540 (CLDHRYCYRQ…QGLIVSYTPY (124 aa)). A disulfide bridge links Cys-476 with Cys-499. Residues 667–687 (AVVIGAAGGGALLLFALVLII) traverse the membrane as a helical segment. Topologically, residues 688 to 833 (CFVKKKKKVD…HTQGPVETEE (146 aa)) are cytoplasmic. Tyr-731 carries the post-translational modification Phosphotyrosine. The segment at 783-833 (AKFTAEELAPSSPPESESEPYTFSHPNKGEIGVRETDIPLLHTQGPVETEE) is disordered. Positions 809–819 (NKGEIGVRETD) are enriched in basic and acidic residues.

In terms of assembly, interacts with CDH2/N-cadherin, CDH3/P-cadherin, SDC1/syndecan-1, SDC4/syndecan-4 and the serine protease ST14/MT-SP1. Also interacts SRC and PRKCG/protein kinase C gamma. In terms of processing, phosphorylated on tyrosine by kinases of the SRC family such as SRC and YES as well as by the protein kinase C gamma/PRKCG. Dephosphorylated by phosphotyrosine phosphatases. Also phosphorylated by suramin, a heparin analog. Tyrosine phosphorylated in response to dissociation of integrin alpha-6 beta-4 from laminin-5. N-glycosylated. Post-translationally, a soluble form may also be produced by proteolytic cleavage at the cell surface (shedding). Another peptide of 80 kDa (p80) is present in cultured keratinocytes probably due to tryptic cleavage at an unidentified site on the N-terminal side. Converted to p80 by plasmin, a trypsin-like protease.

It is found in the cell membrane. May be involved in cell adhesion and cell matrix association. May play a role in the regulation of anchorage versus migration or proliferation versus differentiation via its phosphorylation. May be a novel marker for leukemia diagnosis and for immature hematopoietic stem cell subsets. Belongs to the tetraspanin web involved in tumor progression and metastasis. This is CUB domain-containing protein 1 (Cdcp1) from Mus musculus (Mouse).